The sequence spans 185 residues: UPF0669 protein C6orf120 homolog (185 aa).

A signal peptide spans 1–23 (MAARWRRILIVFVAAQVLCLVNT). The N-linked (GlcNAc...) asparagine glycan is linked to Asn47.

Belongs to the UPF0669 family.

The protein localises to the secreted. The chain is UPF0669 protein C6orf120 homolog from Gallus gallus (Chicken).